The chain runs to 631 residues: Peptidyl-prolyl cis-trans isomerase CYP71 (631 aa).

The tract at residues 26–45 is disordered; that stretch reads VEEEEPMVGPGPAPRGKRKR. WD repeat units follow at residues 68 to 106, 111 to 150, 201 to 240, and 257 to 297; these read MHRD…IEFA, SHLG…MMAM, IHMN…FPED, and KCKT…RRVY. The PPIase cyclophilin-type domain maps to 474–628; sequence LPENVIMHTT…QDVKILNVTV (155 aa).

It belongs to the cyclophilin-type PPIase family. Interacts with FAS1 and LHP1. Interacts (via WD repeat domain) with histone H3. Ubiquitous. Expressed in the meristems.

The protein resides in the nucleus. It catalyses the reaction [protein]-peptidylproline (omega=180) = [protein]-peptidylproline (omega=0). Functionally, PPIases accelerate the folding of proteins. It catalyzes the cis-trans isomerization of proline imidic peptide bonds in oligopeptides. Histone proline isomerase that increases the rate of cis-trans isomerization of the synthetic histone H3 peptides H3P30 (RKSAP30F-p-nitroanilide) and H3P30K27me3 (RKme3-SAP30F-p-nitroanilide) in the histone H3 N-terminal tail, in vitro. Histone remodeling factor involved in chromatin-based gene silencing. Reinforces H3K27 methylation. Involved in fundamental processes of chromatin assembly and histone modification by mediating the targeting of FAS1 and LHP1 on the chromatin. Required for the formation and development of leaves, for normal phyllotaxy and for the formation, maintenance and activity of root and shoot apical meristems. The protein is Peptidyl-prolyl cis-trans isomerase CYP71 of Arabidopsis thaliana (Mouse-ear cress).